The primary structure comprises 201 residues: METEQDEVAQDELGPEIALDKDPFQLTVEDVYDISHIVGQDLLKISREARGVSSLVSDLQFKIVRVLEMLEALVNQSSLSAEELKMERDNLKAEVERLLKDGPQMGVGPDKMVIDLTDPNRPRFTLQELRDVLQERNKLKVKLLVAQDELQCYKSGIIPSPDDQIVTLENESMITCSPRENESKEKSTVKSLFSFKQGKQT.

In terms of domain architecture, RH1 spans 14–108; the sequence is GPEIALDKDP…LKDGPQMGVG (95 aa). Residues 67-155 adopt a coiled-coil conformation; sequence LEMLEALVNQ…AQDELQCYKS (89 aa). The RH2 domain occupies 121–197; the sequence is RPRFTLQELR…TVKSLFSFKQ (77 aa). A disordered region spans residues 177-201; sequence SPRENESKEKSTVKSLFSFKQGKQT. A compositionally biased stretch (basic and acidic residues) spans 179-188; sequence RENESKEKST.

This sequence belongs to the RILPL family.

It localises to the cytoplasm. It is found in the cytosol. The protein resides in the cytoskeleton. Its subcellular location is the microtubule organizing center. The protein localises to the centrosome. It localises to the cell projection. It is found in the cilium. In terms of biological role, involved in cell shape and neuronal morphogenesis, positively regulating the establishment and maintenance of dendritic spines. Plays a role in cellular protein transport. This chain is RILP-like protein 2 (rilpl2), found in Xenopus tropicalis (Western clawed frog).